The primary structure comprises 94 residues: Putative toxin RelE4 (94 aa).

The protein belongs to the RelE toxin family.

In terms of biological role, toxic component of a type II toxin-antitoxin (TA) system. Its cognate antitoxin is RelB4 (Potential). In Methanocaldococcus jannaschii (strain ATCC 43067 / DSM 2661 / JAL-1 / JCM 10045 / NBRC 100440) (Methanococcus jannaschii), this protein is Putative toxin RelE4 (relE4).